The chain runs to 423 residues: AIELNQIWDFPIKEFHPFPRALMGVGAHDIIGVEAKNLGFKRTLLMTTGLRGSGIIEELVGKIEYQGVEVVLYDKVESNPKDYNVMEAAALYQKEKCDSIISIGGGSSHDAAKGARVVIAHDGRNINEFEGFAKSTNKENPPHIAVSTTAGTGSETSWAYVITDTSDMNNPHKWVGFDEATIVTLAIDDPLLYYTCPQHFTAYCGFDVLAHGSEPFVSRLDFAPSLGNAIYSVELVAKNLREAVFEPRNLKAREGMMNAQYIAGQAFNSGGLGIVHSISHAVSAFFDSHHGLNNAIALPRVWEYNLPSRYERYAQLAGALGVDTRNLTTVQAADAAVEAAIRLAKDVGIPDNFGQVRTDSYAKNQMNTKKYEGRGDVIKGDEKTVRAISEHIQDDWCTPGNPREVTVESMIPVVDHAINKSYF.

This sequence belongs to the iron-containing alcohol dehydrogenase family. In terms of assembly, homodecamer. Requires Mg(2+) as cofactor. It depends on Zn(2+) as a cofactor. NADPH is required as a cofactor.

The enzyme catalyses methanol + A = formaldehyde + AH2. Functionally, catalyzes the oxidation of methanol to yield formaldehyde. While the in vivo electron acceptor is not known, N,N-dimethyl-4-nitrosoaniline (NDMA) can serve this function in vitro and is reduced to 4-(hydroxylamino)-N,N-dimethylaniline. This Rhodococcus erythropolis (Arthrobacter picolinophilus) protein is Methanol:N,N-dimethyl-4-nitrosoaniline oxidoreductase (thcE).